The chain runs to 148 residues: Macrodomain Ter protein (148 aa).

The protein belongs to the MatP family. As to quaternary structure, homodimer.

Its subcellular location is the cytoplasm. Functionally, required for spatial organization of the terminus region of the chromosome (Ter macrodomain) during the cell cycle. Prevents early segregation of duplicated Ter macrodomains during cell division. Binds specifically to matS, which is a 13 bp signature motif repeated within the Ter macrodomain. This chain is Macrodomain Ter protein, found in Pasteurella multocida (strain Pm70).